We begin with the raw amino-acid sequence, 414 residues long: Histidine--tRNA ligase (414 aa).

This sequence belongs to the class-II aminoacyl-tRNA synthetase family. In terms of assembly, homodimer.

The protein localises to the cytoplasm. It catalyses the reaction tRNA(His) + L-histidine + ATP = L-histidyl-tRNA(His) + AMP + diphosphate + H(+). This chain is Histidine--tRNA ligase (hisS), found in Mycoplasma genitalium (strain ATCC 33530 / DSM 19775 / NCTC 10195 / G37) (Mycoplasmoides genitalium).